The following is a 291-amino-acid chain: Glycine--tRNA ligase alpha subunit (291 aa).

Belongs to the class-II aminoacyl-tRNA synthetase family. In terms of assembly, tetramer of two alpha and two beta subunits.

The protein resides in the cytoplasm. It carries out the reaction tRNA(Gly) + glycine + ATP = glycyl-tRNA(Gly) + AMP + diphosphate. In Nitratidesulfovibrio vulgaris (strain DSM 19637 / Miyazaki F) (Desulfovibrio vulgaris), this protein is Glycine--tRNA ligase alpha subunit.